We begin with the raw amino-acid sequence, 465 residues long: Ribulose bisphosphate carboxylase large chain (465 aa).

Lys-4 is modified (N6,N6,N6-trimethyllysine). Residues Asn-113 and Thr-163 each contribute to the substrate site. Lys-165 serves as the catalytic Proton acceptor. Lys-167 is a substrate binding site. Lys-191, Asp-193, and Glu-194 together coordinate Mg(2+). Lys-191 is modified (N6-carboxylysine). The active-site Proton acceptor is His-284. The substrate site is built by Arg-285, His-317, and Ser-369.

This sequence belongs to the RuBisCO large chain family. Type I subfamily. In terms of assembly, heterohexadecamer of 8 large chains and 8 small chains; disulfide-linked. The disulfide link is formed within the large subunit homodimers. It depends on Mg(2+) as a cofactor. The disulfide bond which can form in the large chain dimeric partners within the hexadecamer appears to be associated with oxidative stress and protein turnover.

The protein localises to the plastid. The protein resides in the chloroplast. It catalyses the reaction 2 (2R)-3-phosphoglycerate + 2 H(+) = D-ribulose 1,5-bisphosphate + CO2 + H2O. It carries out the reaction D-ribulose 1,5-bisphosphate + O2 = 2-phosphoglycolate + (2R)-3-phosphoglycerate + 2 H(+). In terms of biological role, ruBisCO catalyzes two reactions: the carboxylation of D-ribulose 1,5-bisphosphate, the primary event in carbon dioxide fixation, as well as the oxidative fragmentation of the pentose substrate in the photorespiration process. Both reactions occur simultaneously and in competition at the same active site. The polypeptide is Ribulose bisphosphate carboxylase large chain (Manilkara zapota (Sapodilla plum)).